Consider the following 528-residue polypeptide: MSTENAHLQKEDIVIESWLHKKGEHIRNWRPRYFILFRDGTLLGFRSKPKEDQPLPEPLNNFMIRDAATVCLDKPRPNMFIVRCLQWTTVIERTFYADSADFRQMWIEAIQAVSSHNRLKENAGNTSMQEEDTNGNPSGESDVNMDATSTRSDNDFESTVMNIDEPEEVPRKNTVTMDDFDFLKVLGQGTFGKVILCREKSSDKLYAIKIIRKEMVVDRSEVAHTLTENRVLYACVHPFLTLLKYSFQAQYHICFVMEFANGGELFTHLQRCKTFSEARTRFYGSEIILALGYLHHRNIVYRDMKLENLLLDRDGHIKITDFGLCKEEIKYGDKTSTFCGTPEYLAPEVIEDIDYDRSVDWWGVGVVMYEMMCGRLPFSAKENGKLFELITTCDLKFPNRLSPEAVTLLSGLLERVPAKRLGAGPDDAREVSRAEFFKDVDWEATLRKEVEPPFKPNVMSETDTSFFDREFTSMPVQLTPPRRGEELPTVDEEEELQANFIQFASYYVSGSLERSYDTNRSADKYEIR.

Residues 12–115 (DIVIESWLHK…WIEAIQAVSS (104 aa)) enclose the PH domain. Residues 121–153 (ENAGNTSMQEEDTNGNPSGESDVNMDATSTRSD) form a disordered region. Polar residues predominate over residues 123 to 153 (AGNTSMQEEDTNGNPSGESDVNMDATSTRSD). Positions 180-437 (FDFLKVLGQG…AREVSRAEFF (258 aa)) constitute a Protein kinase domain. ATP-binding positions include 186–194 (LGQGTFGKV) and K209. The active-site Proton acceptor is the D303. Residues 438–515 (KDVDWEATLR…YYVSGSLERS (78 aa)) form the AGC-kinase C-terminal domain.

It belongs to the protein kinase superfamily. AGC Ser/Thr protein kinase family. RAC subfamily. In terms of assembly, interacts with pdk-1, sgk-1, akt-1 and daf-16. Part of a complex containing sgk-1, akt-1 and akt-2. Mg(2+) serves as cofactor. Expressed in neurons, muscle cells of the pharynx, rectal gland cells, and spermatheca.

The catalysed reaction is L-seryl-[protein] + ATP = O-phospho-L-seryl-[protein] + ADP + H(+). The enzyme catalyses L-threonyl-[protein] + ATP = O-phospho-L-threonyl-[protein] + ADP + H(+). With respect to regulation, phosphorylated and activated by pdk-1. In terms of biological role, acts downstream of PI3 kinase age-1 and kinase pdk-1 in the daf-2/insulin receptor-like transduction pathway. Essential role in regulating developmental arrest at the dauer stage. Phosphorylates Forkhead-related daf-16 and the longevity-promoting skn-1 transcription factors, which inhibits their entry into the nucleus and antagonizes their functions. Role in immune function and pathogen resistance. Downstream of age-1 and together with akt-1 and sgk-1, promotes cell survival during embryonic development. Plays a role in maintaining the gonadal basement membrane through antagonizing akt-1 activity. The polypeptide is Serine/threonine-protein kinase akt-2 (Caenorhabditis elegans).